A 515-amino-acid polypeptide reads, in one-letter code: Tripartite motif-containing protein 5 (515 aa).

Ala2 carries the N-acetylalanine modification. Residues 15 to 60 form an RING-type zinc finger; it reads CPICLELLTEPLSLPCGHSLCQACITANHKESMLYKEEERSCPVCR. Ser87 carries the phosphoserine modification. The segment at 92–133 adopts a B box-type zinc-finger fold; sequence QKVDHCARHGEKLLLFCQEDSKVICWLCERSQEHRGHHTFLM. Positions 97, 100, 119, and 125 each coordinate Zn(2+). Residues 137 to 225 are a coiled coil; it reads AQEYHVKLQT…LTKSETEMVQ (89 aa). Positions 187–200 are required for interaction with GABARAP and for autophagy; sequence FEQLREILDWEESN. A B30.2/SPRY domain is found at 283-515; it reads LKGMLDMFRE…VPMTLCSPSS (233 aa).

Belongs to the TRIM/RBCC family. As to quaternary structure, can form homodimers and homotrimers. In addition to lower-order dimerization, also exhibits a higher-order multimerization and both low- and high-order multimerizations are essential for its restriction activity. Interacts with BTBD1 and BTBD2. Interacts with PSMC4, PSMC5, PSMD7 and HSPA8/HSC70. Interacts (via B30.2/SPRY domain) with HSPA1A/B. Interacts with PSMC2, MAP3K7/TAK1, TAB2 and TAB3. Interacts with SQSTM1. Interacts with TRIM6 and TRIM34. Interacts with ULK1 (phosphorylated form), GABARAP, GABARAPL1, GABARAPL2, MAP1LC3A, MAP1LC3C and BECN1. Post-translationally, degraded in a proteasome-independent fashion in the absence of viral infection but in a proteasome-dependent fashion following exposure to restriction sensitive virus. In terms of processing, autoubiquitinated in a RING finger- and UBE2D2-dependent manner. Monoubiquitinated by TRIM21. Deubiquitinated by Yersinia YopJ. Ubiquitination may not lead to proteasomal degradation.

Its subcellular location is the cytoplasm. The protein resides in the nucleus. The enzyme catalyses S-ubiquitinyl-[E2 ubiquitin-conjugating enzyme]-L-cysteine + [acceptor protein]-L-lysine = [E2 ubiquitin-conjugating enzyme]-L-cysteine + N(6)-ubiquitinyl-[acceptor protein]-L-lysine.. The protein operates within protein modification; protein ubiquitination. Functionally, capsid-specific restriction factor that prevents infection from non-host-adapted retroviruses. Blocks viral replication early in the life cycle, after viral entry but before reverse transcription. In addition to acting as a capsid-specific restriction factor, also acts as a pattern recognition receptor that activates innate immune signaling in response to the retroviral capsid lattice. Binding to the viral capsid triggers its E3 ubiquitin ligase activity, and in concert with the heterodimeric ubiquitin conjugating enzyme complex UBE2V1-UBE2N (also known as UBC13-UEV1A complex) generates 'Lys-63'-linked polyubiquitin chains, which in turn are catalysts in the autophosphorylation of the MAP3K7/TAK1 complex (includes TAK1, TAB2, and TAB3). Activation of the MAP3K7/TAK1 complex by autophosphorylation results in the induction and expression of NF-kappa-B and MAPK-responsive inflammatory genes, thereby leading to an innate immune response in the infected cell. Restricts infection by human immunodeficiency virus type 1 (HIV-1) and N-tropic murine leukemia virus (N-MLV). Plays a role in regulating autophagy through activation of autophagy regulator BECN1 by causing its dissociation from its inhibitors BCL2 and TAB2. The polypeptide is Tripartite motif-containing protein 5 (TRIM5) (Chlorocebus pygerythrus (Vervet monkey)).